The sequence spans 84 residues: Putative membrane protein insertion efficiency factor (84 aa).

The segment at 63–84 is disordered; that stretch reads GEDPVPNHFTLRRNKKEKPSKS.

It belongs to the UPF0161 family.

Its subcellular location is the cell membrane. Functionally, could be involved in insertion of integral membrane proteins into the membrane. In Streptococcus mutans serotype c (strain ATCC 700610 / UA159), this protein is Putative membrane protein insertion efficiency factor.